The sequence spans 367 residues: Riboflavin biosynthesis protein RibD (367 aa).

A CMP/dCMP-type deaminase domain is found at 1-123; that stretch reads MQDEYYMARA…RLQQAGIDVS (123 aa). The deaminase stretch occupies residues 1–145; sequence MQDEYYMARA…KGFLKRMRTG (145 aa). His-50 is a binding site for Zn(2+). The active-site Proton donor is the Glu-52. Zn(2+) contacts are provided by Cys-75 and Cys-84. A reductase region spans residues 146–367; that stretch reads FPYIQLKLGA…PDVCLHLVGA (222 aa). An NADP(+)-binding site is contributed by 161–164; it reads TAMA. Ser-168 is a substrate binding site. Residue Trp-170 coordinates NADP(+). Arg-184 serves as a coordination point for substrate. NADP(+)-binding residues include Thr-196 and Asp-200. 2 residues coordinate substrate: Leu-204 and Arg-207. NADP(+) is bound at residue Ser-234. Position 299 (Glu-299) interacts with substrate. Residue 301–304 participates in NADP(+) binding; that stretch reads GPTL.

In the N-terminal section; belongs to the cytidine and deoxycytidylate deaminase family. This sequence in the C-terminal section; belongs to the HTP reductase family. Homodimer. Zn(2+) is required as a cofactor.

It catalyses the reaction 2,5-diamino-6-hydroxy-4-(5-phosphoribosylamino)-pyrimidine + H2O + H(+) = 5-amino-6-(5-phospho-D-ribosylamino)uracil + NH4(+). The catalysed reaction is 5-amino-6-(5-phospho-D-ribitylamino)uracil + NADP(+) = 5-amino-6-(5-phospho-D-ribosylamino)uracil + NADPH + H(+). Its pathway is cofactor biosynthesis; riboflavin biosynthesis; 5-amino-6-(D-ribitylamino)uracil from GTP: step 2/4. It functions in the pathway cofactor biosynthesis; riboflavin biosynthesis; 5-amino-6-(D-ribitylamino)uracil from GTP: step 3/4. Converts 2,5-diamino-6-(ribosylamino)-4(3h)-pyrimidinone 5'-phosphate into 5-amino-6-(ribosylamino)-2,4(1h,3h)-pyrimidinedione 5'-phosphate. The sequence is that of Riboflavin biosynthesis protein RibD (ribD) from Escherichia coli (strain K12).